Consider the following 143-residue polypeptide: uncharacterized protein (143 aa).

The Rhodanese domain occupies 50–143 (NKEDAVVVDL…GENLPLVRGK (94 aa)). Position 91 is an N6-acetyllysine (K91).

This is an uncharacterized protein from Escherichia coli O6:H1 (strain CFT073 / ATCC 700928 / UPEC).